The chain runs to 73 residues: Small ribosomal subunit protein uS15c (73 aa).

This sequence belongs to the universal ribosomal protein uS15 family. As to quaternary structure, part of the 30S ribosomal subunit.

The protein resides in the plastid. The protein localises to the chloroplast. This is Small ribosomal subunit protein uS15c (rps15) from Welwitschia mirabilis (Tree tumbo).